The sequence spans 98 residues: DNA-binding protein Fis (98 aa).

Residues 74 to 93 (QTRAATMMGINRGTLRKKLK) constitute a DNA-binding region (H-T-H motif).

The protein belongs to the transcriptional regulatory Fis family. Homodimer.

Activates ribosomal RNA transcription. Plays a direct role in upstream activation of rRNA promoters. The sequence is that of DNA-binding protein Fis from Photobacterium profundum (strain SS9).